The chain runs to 2136 residues: U5 small nuclear ribonucleoprotein 200 kDa helicase (2136 aa).

Phosphoserine occurs at positions 17 and 26. Residue Lys46 forms a Glycyl lysine isopeptide (Lys-Gly) (interchain with G-Cter in SUMO2) linkage. Residues 50-80 (TRMGDKAQRTKPQMQEERRAKRRKRDEDRHD) form a disordered region. A coiled-coil region spans residues 54–84 (DKAQRTKPQMQEERRAKRRKRDEDRHDINKM). Residue Ser225 is modified to Phosphoserine. A Phosphothreonine modification is found at Thr389. The interaction with C9orf78 and WBP4 stretch occupies residues 395-2129 (DLDQGGEALA…YKFSVDVKEA (1735 aa)). The 184-residue stretch at 490–673 (RAALETDENL…FLRVDPAKGL (184 aa)) folds into the Helicase ATP-binding 1 domain. Position 503 to 510 (503 to 510 (APTGAGKT)) interacts with ATP. Residues 615-618 (DEIH) carry the DEIH box motif. Residues 684 to 921 (PLEQTYVGIT…NAKDAVNWLG (238 aa)) form the Helicase C-terminal 1 domain. Tyr709 carries the post-translational modification Phosphotyrosine. Lys971 carries the N6-acetyllysine modification. Positions 981-1286 (VTELGRIASH…SCETQLPVSF (306 aa)) constitute an SEC63 1 domain. The interval 1282-2136 (LPVSFRHLIL…KEAETDSDSD (855 aa)) is interaction with TSSC4. The Helicase ATP-binding 2 domain maps to 1337 to 1512 (NTVYNSDDNV…WLGCSATSTF (176 aa)). Residue 1350-1357 (APTGSGKT) coordinates ATP. Phosphothreonine is present on Thr1428. Residues 1454–1457 (DEVH) carry the DEVH box motif. The 209-residue stretch at 1545–1753 (PVYHAITKHS…TIENKQDAVD (209 aa)) folds into the Helicase C-terminal 2 domain. Thr1765 is subject to Phosphothreonine. An SEC63 2 domain is found at 1812–2124 (PLNLGMIAAY…GCDQEYKFSV (313 aa)). Position 2002 is a phosphoserine (Ser2002). A Phosphothreonine modification is found at Thr2131. A phosphoserine mark is found at Ser2133 and Ser2135.

Belongs to the helicase family. SKI2 subfamily. Component of a core complex containing at least PRPF8, SNRNP200, EFTUD2 and SNRNP40. Component of the U5 snRNP and U4/U6-U5 tri-snRNP complexes, building blocks of the spliceosome. Component of the U4/U6-U5 tri-snRNP complex composed of the U4, U6 and U5 snRNAs and at least PRPF3, PRPF4, PRPF6, PRPF8, PRPF31, SNRNP200, TXNL4A, SNRNP40, DDX23, CD2BP2, PPIH, SNU13, EFTUD2, SART1 and USP39. Component of precatalytic, catalytic and postcatalytic spliceosomal complexes. Component of the minor spliceosome, which splices U12-type introns. Interacts with C9orf78; the interaction is direct and mutually exclusive with its interaction with WBP4. Interacts with WBP4; the interaction is mutually exclusive with its interaction with C9orf78. Interacts with PRPF8. Interacts with TSSC4; the interaction is direct, excludes recruitment of C9ORF78 and WBP4 to SNRNP200 and negatively regulates its RNA helicase activity. Widely expressed.

It is found in the nucleus. It carries out the reaction ATP + H2O = ADP + phosphate + H(+). Its function is as follows. Catalyzes the ATP-dependent unwinding of U4/U6 RNA duplices, an essential step in the assembly of a catalytically active spliceosome. Plays a role in pre-mRNA splicing as a core component of precatalytic, catalytic and postcatalytic spliceosomal complexes. As a component of the minor spliceosome, involved in the splicing of U12-type introns in pre-mRNAs. Involved in spliceosome assembly, activation and disassembly. Mediates changes in the dynamic network of RNA-RNA interactions in the spliceosome. The sequence is that of U5 small nuclear ribonucleoprotein 200 kDa helicase (SNRNP200) from Homo sapiens (Human).